We begin with the raw amino-acid sequence, 235 residues long: (5-formylfuran-3-yl)methyl phosphate synthase (235 aa).

The Schiff-base intermediate with substrate role is filled by Lys-27. The Proton acceptor role is filled by Lys-86.

It belongs to the MfnB family.

It catalyses the reaction 2 D-glyceraldehyde 3-phosphate = 4-(hydroxymethyl)-2-furancarboxaldehyde phosphate + phosphate + 2 H2O. Its pathway is cofactor biosynthesis; methanofuran biosynthesis. In terms of biological role, catalyzes the formation of 4-(hydroxymethyl)-2-furancarboxaldehyde phosphate (4-HFC-P) from two molecules of glyceraldehyde-3-P (GA-3-P). In Archaeoglobus fulgidus (strain ATCC 49558 / DSM 4304 / JCM 9628 / NBRC 100126 / VC-16), this protein is (5-formylfuran-3-yl)methyl phosphate synthase.